Here is a 362-residue protein sequence, read N- to C-terminus: GTPase Obg (362 aa).

An Obg domain is found at 1–159 (MKFLDEAKVY…KTIWLRLKLI (159 aa)). The 168-residue stretch at 160–327 (ADAGLVGLPN…VLRALRDVIV (168 aa)) folds into the OBG-type G domain. GTP contacts are provided by residues 166-173 (GLPNAGKS), 191-195 (FTTLH), 212-215 (DIPG), 279-282 (SQID), and 308-310 (SAV). Residues Ser-173 and Thr-193 each contribute to the Mg(2+) site. The disordered stretch occupies residues 332–362 (EEKPAKVPKLRHRDMIVSDEGEGEDGADDQP). Residues 348–362 (VSDEGEGEDGADDQP) are compositionally biased toward acidic residues.

It belongs to the TRAFAC class OBG-HflX-like GTPase superfamily. OBG GTPase family. In terms of assembly, monomer. Mg(2+) is required as a cofactor.

It localises to the cytoplasm. Its function is as follows. An essential GTPase which binds GTP, GDP and possibly (p)ppGpp with moderate affinity, with high nucleotide exchange rates and a fairly low GTP hydrolysis rate. Plays a role in control of the cell cycle, stress response, ribosome biogenesis and in those bacteria that undergo differentiation, in morphogenesis control. The polypeptide is GTPase Obg (Rhizobium etli (strain CIAT 652)).